The chain runs to 749 residues: Transcription factor RFX3 (749 aa).

A DNA-binding region (RFX-type winged-helix) is located at residues 183-258 (HLQWLLDNYE…YHYYGIRVKP (76 aa)).

It belongs to the RFX family.

It is found in the nucleus. In terms of biological role, transcription factor required for ciliogenesis and islet cell differentiation during endocrine pancreas development. The chain is Transcription factor RFX3 (rfx3) from Xenopus tropicalis (Western clawed frog).